Here is a 301-residue protein sequence, read N- to C-terminus: Probable alpha-L-glutamate ligase 1 (301 aa).

The ATP-grasp domain occupies 104–287 (MQLMSRRGIG…VAGAIIAFIE (184 aa)). Residues lysine 141, 178-179 (EY), aspartate 187, and 211-213 (RSN) contribute to the ATP site. Residues aspartate 248, glutamate 260, and asparagine 262 each contribute to the Mg(2+) site. Mn(2+) contacts are provided by aspartate 248, glutamate 260, and asparagine 262.

Belongs to the RimK family. Requires Mg(2+) as cofactor. Mn(2+) serves as cofactor.

In Shewanella amazonensis (strain ATCC BAA-1098 / SB2B), this protein is Probable alpha-L-glutamate ligase 1.